We begin with the raw amino-acid sequence, 390 residues long: Lipid-A-disaccharide synthase (390 aa).

The protein belongs to the LpxB family.

The catalysed reaction is a lipid X + a UDP-2-N,3-O-bis[(3R)-3-hydroxyacyl]-alpha-D-glucosamine = a lipid A disaccharide + UDP + H(+). Its pathway is bacterial outer membrane biogenesis; LPS lipid A biosynthesis. Condensation of UDP-2,3-diacylglucosamine and 2,3-diacylglucosamine-1-phosphate to form lipid A disaccharide, a precursor of lipid A, a phosphorylated glycolipid that anchors the lipopolysaccharide to the outer membrane of the cell. The sequence is that of Lipid-A-disaccharide synthase from Haemophilus influenzae (strain PittGG).